We begin with the raw amino-acid sequence, 529 residues long: Bifunctional purine biosynthesis protein PurH (529 aa).

Positions 1-148 constitute an MGS-like domain; the sequence is MQQRRPVRRA…KNHKDVAIVV (148 aa).

Belongs to the PurH family.

The catalysed reaction is (6R)-10-formyltetrahydrofolate + 5-amino-1-(5-phospho-beta-D-ribosyl)imidazole-4-carboxamide = 5-formamido-1-(5-phospho-D-ribosyl)imidazole-4-carboxamide + (6S)-5,6,7,8-tetrahydrofolate. The enzyme catalyses IMP + H2O = 5-formamido-1-(5-phospho-D-ribosyl)imidazole-4-carboxamide. Its pathway is purine metabolism; IMP biosynthesis via de novo pathway; 5-formamido-1-(5-phospho-D-ribosyl)imidazole-4-carboxamide from 5-amino-1-(5-phospho-D-ribosyl)imidazole-4-carboxamide (10-formyl THF route): step 1/1. The protein operates within purine metabolism; IMP biosynthesis via de novo pathway; IMP from 5-formamido-1-(5-phospho-D-ribosyl)imidazole-4-carboxamide: step 1/1. The protein is Bifunctional purine biosynthesis protein PurH of Salmonella typhi.